The following is a 358-amino-acid chain: Dihydroorotate dehydrogenase (quinone) (358 aa).

Residues 61–65 (AGFDK) and glycine 85 each bind FMN. Lysine 65 is a binding site for substrate. 110 to 114 (NRFGL) lines the substrate pocket. Residues asparagine 139 and asparagine 170 each coordinate FMN. Residue asparagine 170 coordinates substrate. Serine 173 serves as the catalytic Nucleophile. Asparagine 175 serves as a coordination point for substrate. FMN-binding residues include lysine 211 and serine 239. A substrate-binding site is contributed by 240–241 (NT). FMN contacts are provided by residues glycine 263, glycine 292, and 313 to 314 (YS).

This sequence belongs to the dihydroorotate dehydrogenase family. Type 2 subfamily. As to quaternary structure, monomer. FMN serves as cofactor.

Its subcellular location is the cell membrane. The enzyme catalyses (S)-dihydroorotate + a quinone = orotate + a quinol. The protein operates within pyrimidine metabolism; UMP biosynthesis via de novo pathway; orotate from (S)-dihydroorotate (quinone route): step 1/1. Catalyzes the conversion of dihydroorotate to orotate with quinone as electron acceptor. The protein is Dihydroorotate dehydrogenase (quinone) of Methylorubrum extorquens (strain CM4 / NCIMB 13688) (Methylobacterium extorquens).